We begin with the raw amino-acid sequence, 907 residues long: Potassium channel AKT3 (907 aa).

Over 1-75 (MPTTKCAVPL…YDRRYELWNN (75 aa)) the chain is Cytoplasmic. The chain crosses the membrane as a helical span at residues 76–96 (YLILLVVYSAWVTPFEFGFVP). The Extracellular segment spans residues 97–102 (EPAGAL). A helical transmembrane segment spans residues 103–123 (AAADNAVNAFFAVDIVLTFFV). Residues 124-146 (AYTDPKTFLLQDDPRKIALRYIT) lie on the Cytoplasmic side of the membrane. The chain crosses the membrane as a helical span at residues 147–167 (TWFVLDVVATIPTELARRILP). Residues 168 to 174 (PDLRSYG) are Extracellular-facing. A helical; Voltage-sensor membrane pass occupies residues 175–195 (FFGILRLWRLHRVGILFARLE). At 196–209 (KDRKFSYFWVRCVK) the chain is on the cytoplasmic side. Residues 210–230 (LVCVTLFAVHCSACFYYLLAD) form a helical membrane-spanning segment. The Extracellular portion of the chain corresponds to 231–257 (RYPDPTNTWISAYMPNFHKASIWSRYV). Residues 258 to 277 (ASMYWSITTLSTVGYGDMHA) constitute an intramembrane region (pore-forming). Residues 278–288 (ENTGEMVFTTT) lie on the Extracellular side of the membrane. A helical membrane pass occupies residues 289 to 309 (YMLFNLGLTAYIIGNMTNLVV). The Cytoplasmic portion of the chain corresponds to 310 to 907 (HGTSRTRKFR…VPPENRSRNQ (598 aa)). 388–512 (LFEGVSNDLI…TIVMNNLIQY (125 aa)) is an a nucleoside 3',5'-cyclic phosphate binding site. 5 ANK repeats span residues 539–568 (DFPI…DPNE), 572–601 (YGRT…DSNS), 605–634 (EGRV…DLSG), 636–665 (DAAP…DVSG), and 670–699 (DGTT…DADA). Disordered regions lie at residues 726–779 (ATRH…TPQR) and 801–824 (GGYR…SSPP). Residues 754 to 776 (SSPSSSSRRGRTSSTSAASARST) show a composition bias toward low complexity. Positions 803 to 812 (YRGGGGGGGA) are enriched in gly residues. Positions 827–907 (RVAISCPESR…VPPENRSRNQ (81 aa)) constitute a KHA domain.

It belongs to the potassium channel family. Plant (TC 1.A.1.4) subfamily.

It is found in the membrane. Probable inward-rectifying potassium channel. Assuming opened or closed conformations in response to the voltage difference across the membrane, the channel is activated by hyperpolarization. The polypeptide is Potassium channel AKT3 (Oryza sativa subsp. japonica (Rice)).